Reading from the N-terminus, the 308-residue chain is Elongation factor Ts (308 aa).

Positions 80 to 83 (TDFV) are involved in Mg(2+) ion dislocation from EF-Tu.

The protein belongs to the EF-Ts family.

Its subcellular location is the cytoplasm. Associates with the EF-Tu.GDP complex and induces the exchange of GDP to GTP. It remains bound to the aminoacyl-tRNA.EF-Tu.GTP complex up to the GTP hydrolysis stage on the ribosome. The sequence is that of Elongation factor Ts from Rhodopseudomonas palustris (strain BisB18).